The sequence spans 134 residues: Large ribosomal subunit protein bL20 (134 aa).

This sequence belongs to the bacterial ribosomal protein bL20 family.

Its function is as follows. Binds directly to 23S ribosomal RNA and is necessary for the in vitro assembly process of the 50S ribosomal subunit. It is not involved in the protein synthesizing functions of that subunit. The chain is Large ribosomal subunit protein bL20 from Rhizobium etli (strain CIAT 652).